A 150-amino-acid chain; its full sequence is Arginine repressor (150 aa).

It belongs to the ArgR family.

The protein localises to the cytoplasm. Its pathway is amino-acid biosynthesis; L-arginine biosynthesis [regulation]. In terms of biological role, regulates arginine biosynthesis genes. This is Arginine repressor from Finegoldia magna (strain ATCC 29328 / DSM 20472 / WAL 2508) (Peptostreptococcus magnus).